We begin with the raw amino-acid sequence, 306 residues long: Ribonuclease Z (306 aa).

Zn(2+) contacts are provided by His-63, His-65, Asp-67, His-68, His-141, Asp-211, and His-269. Residue Asp-67 is the Proton acceptor of the active site.

It belongs to the RNase Z family. Homodimer. Zn(2+) is required as a cofactor.

The enzyme catalyses Endonucleolytic cleavage of RNA, removing extra 3' nucleotides from tRNA precursor, generating 3' termini of tRNAs. A 3'-hydroxy group is left at the tRNA terminus and a 5'-phosphoryl group is left at the trailer molecule.. In terms of biological role, zinc phosphodiesterase, which displays some tRNA 3'-processing endonuclease activity. Probably involved in tRNA maturation, by removing a 3'-trailer from precursor tRNA. The polypeptide is Ribonuclease Z (Macrococcus caseolyticus (strain JCSC5402) (Macrococcoides caseolyticum)).